A 44-amino-acid polypeptide reads, in one-letter code: Photosystem II reaction center protein K (44 aa).

The propeptide occupies M1–A7. Residues L23–F43 traverse the membrane as a helical segment.

It belongs to the PsbK family. PSII is composed of 1 copy each of membrane proteins PsbA, PsbB, PsbC, PsbD, PsbE, PsbF, PsbH, PsbI, PsbJ, PsbK, PsbL, PsbM, PsbT, PsbX, PsbY, PsbZ, Psb30/Ycf12, at least 3 peripheral proteins of the oxygen-evolving complex and a large number of cofactors. It forms dimeric complexes.

The protein localises to the plastid. It localises to the chloroplast thylakoid membrane. Functionally, one of the components of the core complex of photosystem II (PSII). PSII is a light-driven water:plastoquinone oxidoreductase that uses light energy to abstract electrons from H(2)O, generating O(2) and a proton gradient subsequently used for ATP formation. It consists of a core antenna complex that captures photons, and an electron transfer chain that converts photonic excitation into a charge separation. This Trieres chinensis (Marine centric diatom) protein is Photosystem II reaction center protein K.